We begin with the raw amino-acid sequence, 1353 residues long: Ankyrin repeat domain-containing protein 36B (1353 aa).

ANK repeat units lie at residues 19–48, 52–81, 85–114, 118–147, 151–180, and 184–213; these read YHLKRIHRAVLRGNLEKLKYLLLTYYDANK, KERTALHLACATGQPEMVHLLVSRRCELNL, EDRTPLIKAVQLRQEACATLLLQNGADPNI, FGRTALHYAVYNEDTSMIEKLLSHGTNIEE, NEYQPLLLAVSRRKVKMVEFLLKKKANVNA, and LGRSALILAVTLGEKDIVILLLQHNIDVFS. Disordered stretches follow at residues 249–307 and 349–607; these read PINS…KDSV and MGGG…KATS. Positions 250–259 are enriched in polar residues; the sequence is INSNPVSPQK. Composition is skewed to basic and acidic residues over residues 260-272 and 295-306; these read QRAEKATSDDKDS and PAEKATSDEKDS. 2 stretches are compositionally biased toward polar residues: residues 355 to 367 and 389 to 400; these read GTVSSQKQPASKT and GTVSSQKQQALK. Composition is skewed to basic and acidic residues over residues 436-455 and 471-491; these read TSDEKDSFSNITREKKDGEI and SVKEDSVLNIAREKKDGEKSR. Over residues 579–600 the composition is skewed to polar residues; the sequence is VSNIPTEIKDGQQSGTVSSQKQ. 4 coiled-coil regions span residues 731–762, 821–908, 937–1055, and 1119–1344; these read AEQDLEMASEGEQKRLEEYENNQPQVKNQIHS, IKLK…YRIE, SETD…DHDQ, and VFEH…LQHS.

Belongs to the ANKRD36 family.

The polypeptide is Ankyrin repeat domain-containing protein 36B (ANKRD36B) (Homo sapiens (Human)).